We begin with the raw amino-acid sequence, 174 residues long: Cytoglobin-1 (174 aa).

Residues 15 to 165 (SLTEEDVCVI…LYWQMNRVYA (151 aa)) form the Globin domain. Heme b-binding residues include His78 and His110.

Belongs to the globin family. In terms of assembly, monomeric. In terms of tissue distribution, expressed in all tissues examined with highest levels in brain, eye, gut and heart.

The protein resides in the cytoplasm. It is found in the nucleus. It catalyses the reaction Fe(II)-heme b-[protein] + nitric oxide + O2 = Fe(III)-heme b-[protein] + nitrate. The catalysed reaction is Fe(III)-heme b-[protein] + nitric oxide + H2O = Fe(II)-heme b-[protein] + nitrite + 2 H(+). The enzyme catalyses 2 superoxide + 2 H(+) = H2O2 + O2. It carries out the reaction H2O2 + AH2 = A + 2 H2O. Probable multifunctional globin with a hexacoordinated heme iron required for the catalysis of various reactions depending on redox condition of the cell as well as oxygen availability. Has a nitric oxide dioxygenase (NOD) activity and is most probably involved in cell-mediated and oxygen-dependent nitric oxide consumption. Under normoxic conditions functions as a nitric oxide dioxygenase (NOD) but under hypoxic conditions the globin may switch its function to that of a nitrite (NO2) reductase (NiR), generating nitric oxide. Could also have peroxidase and superoxide dismutase activities, detoxifying reactive oxygen species and protecting cells against oxidative stress. Also binds dioxygen with low affinity and could function as an oxygen sensor but has probably no function as a respiratory oxygen carrier. The sequence is that of Cytoglobin-1 (cygb1) from Danio rerio (Zebrafish).